We begin with the raw amino-acid sequence, 191 residues long: dCTP deaminase (191 aa).

DCTP contacts are provided by residues 112 to 117 (KSTYAR), 136 to 138 (TLE), glutamine 157, tyrosine 173, and glutamine 183. Glutamate 138 (proton donor/acceptor) is an active-site residue.

The protein belongs to the dCTP deaminase family. As to quaternary structure, homotrimer.

The enzyme catalyses dCTP + H2O + H(+) = dUTP + NH4(+). The protein operates within pyrimidine metabolism; dUMP biosynthesis; dUMP from dCTP (dUTP route): step 1/2. Functionally, catalyzes the deamination of dCTP to dUTP. This is dCTP deaminase from Xylella fastidiosa (strain M12).